The primary structure comprises 323 residues: Thymidylate synthase (323 aa).

DUMP contacts are provided by residues Arg-21 and 172–173 (RR). Residue Cys-192 is the Nucleophile of the active site. Residues 214 to 217 (RSND), Asn-225, and 255 to 257 (HVY) each bind dUMP. A (6R)-5,10-methylene-5,6,7,8-tetrahydrofolate-binding site is contributed by Asp-217. A (6R)-5,10-methylene-5,6,7,8-tetrahydrofolate-binding site is contributed by Ala-322.

This sequence belongs to the thymidylate synthase family. Bacterial-type ThyA subfamily. Homodimer.

It is found in the cytoplasm. The catalysed reaction is dUMP + (6R)-5,10-methylene-5,6,7,8-tetrahydrofolate = 7,8-dihydrofolate + dTMP. It participates in pyrimidine metabolism; dTTP biosynthesis. In terms of biological role, catalyzes the reductive methylation of 2'-deoxyuridine-5'-monophosphate (dUMP) to 2'-deoxythymidine-5'-monophosphate (dTMP) while utilizing 5,10-methylenetetrahydrofolate (mTHF) as the methyl donor and reductant in the reaction, yielding dihydrofolate (DHF) as a by-product. This enzymatic reaction provides an intracellular de novo source of dTMP, an essential precursor for DNA biosynthesis. The polypeptide is Thymidylate synthase (Bordetella parapertussis (strain 12822 / ATCC BAA-587 / NCTC 13253)).